Reading from the N-terminus, the 130-residue chain is NADH-quinone oxidoreductase subunit A (130 aa).

The next 3 helical transmembrane spans lie at Ala-15 to Ile-35, Phe-67 to Ala-87, and Trp-95 to Leu-115.

The protein belongs to the complex I subunit 3 family. In terms of assembly, NDH-1 is composed of 14 different subunits. Subunits NuoA, H, J, K, L, M, N constitute the membrane sector of the complex.

The protein localises to the cell inner membrane. It catalyses the reaction a quinone + NADH + 5 H(+)(in) = a quinol + NAD(+) + 4 H(+)(out). Functionally, NDH-1 shuttles electrons from NADH, via FMN and iron-sulfur (Fe-S) centers, to quinones in the respiratory chain. The immediate electron acceptor for the enzyme in this species is believed to be ubiquinone. Couples the redox reaction to proton translocation (for every two electrons transferred, four hydrogen ions are translocated across the cytoplasmic membrane), and thus conserves the redox energy in a proton gradient. This is NADH-quinone oxidoreductase subunit A from Rhodopseudomonas palustris (strain BisA53).